The primary structure comprises 276 residues: U6 snRNA phosphodiesterase 1 (276 aa).

A disordered region spans residues 1 to 58 (MIVNYSSSSSEEESGSSSSPSGKRQKLDTETSEALDHGSAQRKVCKSSHLTPRLPLPE). His131 serves as the catalytic Proton acceptor. AMP contacts are provided by residues 131–133 (HLS), Tyr213, and 215–221 (DPSFHIS). Residues Tyr213 and 217–221 (SFHIS) contribute to the UMP site. The active-site Proton donor is the His219.

Belongs to the 2H phosphoesterase superfamily. USB1 family.

The protein localises to the nucleus. It carries out the reaction a 3'-end uridylyl-uridine-RNA = a 3'-end 2',3'-cyclophospho-uridine-RNA + uridine. The catalysed reaction is a 3'-end uridylyl-adenosine-RNA = a 3'-end 2',3'-cyclophospho-uridine-RNA + adenosine. Its function is as follows. 3'-5' RNA exonuclease that trims the 3' end of oligo(U) and oligo(A) tracts of the pre-U6 small nuclear RNA (snRNA) molecule, leading to the formation of a mature U6 snRNA 3' end-terminated with a 2',3'-cyclic phosphate. Participates in the U6 snRNA 3' end processing that prevents U6 snRNA degradation. In addition also removes uridines from the 3' end of U6atac snRNA and possibly the vault RNA VTRNA1-1. This Danio rerio (Zebrafish) protein is U6 snRNA phosphodiesterase 1.